The following is a 414-amino-acid chain: MTQANLSETLFKPRFKHPETSTLVRRFSHGAQPPVQSALDGKTIPHWYRMINRLMWIWRGIDPREILDVQARIVMSDAERTDDDLYDTVIGYRGGNWIYEWATQAMVWQQKACAEEDPQLSGRHWLHAATLYNIAAYPHLKGDDLAEQAQALSNRAYEEAAQRLPGTMRQMEFTVPGGAPITGFLHMPKGDGPFPTVLMCGGLDAMQTDYYSLYERYFAPRGIAMLTIDMPSVGFSSKWKLTQDSSLLHQHVLKALPNVPWVDHTRVAAFGFRFGANVAVRLAYLESPRLKAVACLGPVVHTLLSDFKCQQQVPEMYLDVLASRLGMHDASDEALRVELNRYSLKVQGLLGRRCPTPMLSGYWKNDPFSPEEDSRLITSSSADGKLLEIPFNPVYRNFDKGLQEITDWIEKRLC.

It belongs to the FrsA family.

It catalyses the reaction a carboxylic ester + H2O = an alcohol + a carboxylate + H(+). Its function is as follows. Catalyzes the hydrolysis of esters. The polypeptide is Esterase FrsA (Escherichia coli O45:K1 (strain S88 / ExPEC)).